Here is a 352-residue protein sequence, read N- to C-terminus: Desmethylxanthohumol 6'-O-methyltransferase (352 aa).

D219 is an S-adenosyl-L-methionine binding site. The active-site Proton acceptor is the H257.

The protein belongs to the class I-like SAM-binding methyltransferase superfamily. Cation-independent O-methyltransferase family. In terms of assembly, homodimer. As to expression, highly expressed in lupulin glands. Detected in early-, mid- and late-stage cones.

It is found in the cytoplasm. It catalyses the reaction desmethylxanthohumol + S-adenosyl-L-methionine = xanthohumol + S-adenosyl-L-homocysteine + H(+). The enzyme catalyses xanthogalenol + S-adenosyl-L-methionine = 4'-O-methylxanthohumol + S-adenosyl-L-homocysteine + H(+). It functions in the pathway secondary metabolite biosynthesis. With respect to regulation, inhibited by S-adenosyl homocysteine. In terms of biological role, involved in the biosynthesis of prenylated phenolics natural products which contribute to the bitter taste of beer and display broad biological activities. Catalyzes the biosynthesis of xanthohumol. Methylates desmethylxanthohumol and xanthogalenol, but not caffeic acid, prenylflavanones, simple phenols or phenylpropanoids. The chain is Desmethylxanthohumol 6'-O-methyltransferase from Humulus lupulus (European hop).